The sequence spans 102 residues: MQRQKIRIRLKGFDHRVLDVSTREIVNTAKRTGAQVLGPIPLPTRLEKFTVLRGPHIDKKSREQFEIRTHKRVLDIVDPTPQTVDALMKLDLAAGVDVEIKL.

The protein belongs to the universal ribosomal protein uS10 family. Part of the 30S ribosomal subunit.

Its function is as follows. Involved in the binding of tRNA to the ribosomes. The polypeptide is Small ribosomal subunit protein uS10 (Parvibaculum lavamentivorans (strain DS-1 / DSM 13023 / NCIMB 13966)).